The primary structure comprises 147 residues: MTNPQFAGHPFGTTVTAETLRNTFAPLTQWEDKYRQLIMLGKQLPALPDELKAQAKEIAGCENRVWLGYTVAENGKMHFFGDSEGRIVRGLLAVLLTAVEGKTAAELQAQSPLALFDELGLRAQLSASRSQGLNALSEAIIAATKQV.

Cysteine 61 functions as the Cysteine persulfide intermediate in the catalytic mechanism. Cysteine persulfide is present on cysteine 61.

The protein belongs to the SufE family. As to quaternary structure, homodimer. Forms a heterodimer with CsdA. Interacts with CsdA and with TcdA/CsdL.

In terms of biological role, stimulates the cysteine desulfurase activity of CsdA. Contains a cysteine residue (Cys-61) that acts to accept sulfur liberated via the desulfurase activity of CsdA. May be able to transfer sulfur to TcdA/CsdL. Seems to support the function of TcdA in the generation of cyclic threonylcarbamoyladenosine at position 37 (ct(6)A37) in tRNAs that read codons beginning with adenine. Does not appear to participate in Fe/S biogenesis. The chain is Sulfur acceptor protein CsdE (csdE) from Escherichia coli (strain K12).